Consider the following 536-residue polypeptide: Protoporphyrinogen oxidase, chloroplastic (536 aa).

Residues 1–36 (MAAAAAAMATATSATAAPPLRIRDAARRTRRRGHVR) constitute a chloroplast transit peptide. FAD is bound by residues 62-67 (GGGISG), 87-88 (EA), and 111-114 (GPNS). The disordered stretch occupies residues 248-272 (TIKTIQERGKNPKPPRDPRLPTPKG). The segment covering 252–266 (IQERGKNPKPPRDPR) has biased composition (basic and acidic residues). 510 to 512 (VAL) contacts FAD.

Belongs to the protoporphyrinogen/coproporphyrinogen oxidase family. Protoporphyrinogen oxidase subfamily. FAD is required as a cofactor.

The protein localises to the plastid. It is found in the chloroplast. It catalyses the reaction protoporphyrinogen IX + 3 O2 = protoporphyrin IX + 3 H2O2. The protein operates within porphyrin-containing compound metabolism; protoporphyrin-IX biosynthesis; protoporphyrin-IX from protoporphyrinogen-IX: step 1/1. Its pathway is porphyrin-containing compound metabolism; chlorophyll biosynthesis. In terms of biological role, catalyzes the 6-electron oxidation of protoporphyrinogen-IX to form protoporphyrin-IX. In Oryza sativa subsp. japonica (Rice), this protein is Protoporphyrinogen oxidase, chloroplastic (PPOX1).